Consider the following 389-residue polypeptide: Arrestin-C (389 aa).

The disordered stretch occupies residues 369–389 (AQQEPSGESQEALAAEGNEGS).

Belongs to the arrestin family. Homodimer; disulfide-linked in response to retinal illumination. Interacts with CXCR4; the interaction is dependent on the C-terminal phosphorylation of CXCR4 and modulates the calcium ion mobilization activity of CXCR4. Interacts with GPR84. As to expression, expressed in cone photoreceptors in the retina (at protein level).

The protein localises to the photoreceptor inner segment. The protein resides in the cell projection. It is found in the cilium. It localises to the photoreceptor outer segment. May play a role in an as yet undefined retina-specific signal transduction. Could bind to photoactivated-phosphorylated red/green opsins. This chain is Arrestin-C (ARR3), found in Bos taurus (Bovine).